A 583-amino-acid polypeptide reads, in one-letter code: Glucosidase 2 subunit beta (583 aa).

The signal sequence occupies residues 1-26; it reads MVRLNLAVVALAAGALSASASASSSA. A disulfide bond links Cys-91 and Cys-115. Positions 130–252 form a coiled coil; the sequence is NRCEKVGKEY…LTLLLDDLAK (123 aa). Positions 455 to 562 constitute an MRH domain; sequence NKCFSKDMGE…KVATPAVCFP (108 aa). Intrachain disulfides connect Cys-457–Cys-470, Cys-519–Cys-548, and Cys-533–Cys-560. A Prevents secretion from ER motif is present at residues 580–583; the sequence is KDEL.

Heterodimer of a catalytic subunit alpha and a subunit beta.

The protein localises to the endoplasmic reticulum. Functionally, subunit of glucosidase 2, which cleaves sequentially the 2 innermost alpha-1,3-linked glucose residues from the Glc(2)Man(9)GlcNAc(2) oligosaccharide precursor of immature glycoproteins in the endoplasmic reticulum (ER). Specifically required for the cleavage of the final glucose. The subunit beta retains the catalytic subunit alpha in the ER. The sequence is that of Glucosidase 2 subunit beta from Mycosarcoma maydis (Corn smut fungus).